The following is a 181-amino-acid chain: ATP-dependent protease subunit ClpQ (181 aa).

Residue S2 is part of the active site. 3 residues coordinate Na(+): G165, C168, and T171.

As to quaternary structure, a double ring-shaped homohexamer of ClpQ is capped on each side by a ring-shaped ClpY homohexamer. The assembly of the ClpQ/ClpY complex is dependent on binding of ATP.

Its subcellular location is the cytoplasm. Functionally, protease subunit of a proteasome-like degradation complex. This Bacillus subtilis (strain 168) protein is ATP-dependent protease subunit ClpQ (clpQ).